The chain runs to 684 residues: RNA helicase NPH-II (684 aa).

The Helicase ATP-binding domain occupies 184-359 (FRAWAARRPT…EFFPDAEFVH (176 aa)). An ATP-binding site is contributed by 197-204 (GGTGVGKT). The DEXH box motif lies at 308 to 311 (DEVH). Residues 392–563 (NVSAALSAHR…DLYVQPSDLE (172 aa)) enclose the Helicase C-terminal domain.

The protein belongs to the DEAD box helicase family. DEAH subfamily. Monomer.

Its subcellular location is the virion. The catalysed reaction is ATP + H2O = ADP + phosphate + H(+). Functionally, NTP-dependent helicase that catalyzes unidirectional unwinding of 3'tailed duplex RNAs and plays an important role during transcription of early mRNAs, presumably by preventing R-loop formation behind the elongating RNA polymerase. Might also play a role in the export of newly synthesized mRNA chains out of the core into the cytoplasm. Required for replication and propagation of viral particles. This chain is RNA helicase NPH-II (NPH2), found in Homo sapiens (Human).